Reading from the N-terminus, the 146-residue chain is Large ribosomal subunit protein uL15 (146 aa).

Residues 1–18 (MKLHELKPTPGSRHERNR) show a composition bias toward basic and acidic residues. A disordered region spans residues 1 to 69 (MKLHELKPTP…RLPKRGFNNP (69 aa)). Residues 42–52 (SGGGVRPGFEG) are compositionally biased toward gly residues.

It belongs to the universal ribosomal protein uL15 family. Part of the 50S ribosomal subunit.

Its function is as follows. Binds to the 23S rRNA. The chain is Large ribosomal subunit protein uL15 from Exiguobacterium sp. (strain ATCC BAA-1283 / AT1b).